The primary structure comprises 310 residues: Lipoyl synthase (310 aa).

The [4Fe-4S] cluster site is built by C51, C56, C62, C77, C81, C84, and S290. The Radical SAM core domain maps to 63-280 (WSRKTATYLA…RRVGESLGLF (218 aa)).

This sequence belongs to the radical SAM superfamily. Lipoyl synthase family. [4Fe-4S] cluster serves as cofactor.

It localises to the cytoplasm. It carries out the reaction [[Fe-S] cluster scaffold protein carrying a second [4Fe-4S](2+) cluster] + N(6)-octanoyl-L-lysyl-[protein] + 2 oxidized [2Fe-2S]-[ferredoxin] + 2 S-adenosyl-L-methionine + 4 H(+) = [[Fe-S] cluster scaffold protein] + N(6)-[(R)-dihydrolipoyl]-L-lysyl-[protein] + 4 Fe(3+) + 2 hydrogen sulfide + 2 5'-deoxyadenosine + 2 L-methionine + 2 reduced [2Fe-2S]-[ferredoxin]. It participates in protein modification; protein lipoylation via endogenous pathway; protein N(6)-(lipoyl)lysine from octanoyl-[acyl-carrier-protein]: step 2/2. Catalyzes the radical-mediated insertion of two sulfur atoms into the C-6 and C-8 positions of the octanoyl moiety bound to the lipoyl domains of lipoate-dependent enzymes, thereby converting the octanoylated domains into lipoylated derivatives. This is Lipoyl synthase from Chlamydia abortus (strain DSM 27085 / S26/3) (Chlamydophila abortus).